A 900-amino-acid polypeptide reads, in one-letter code: Alpha-actinin-3 (900 aa).

N-acetylmethionine is present on Met-1. The tract at residues 1–26 (MMMVMQPEGLGAGEGPFSGGGGGEYM) is disordered. Residues 1–260 (MMMVMQPEGL…IMTYVSCFYH (260 aa)) are actin-binding. Gly residues predominate over residues 10–24 (LGAGEGPFSGGGGGE). Calponin-homology (CH) domains are found at residues 44–148 (KQQR…LRFA) and 157–263 (TSAK…HAFA). 4 Spectrin repeats span residues 287 to 397 (KLME…WLLS), 407 to 512 (HLAE…ALER), 522 to 633 (QLQL…TLQE), and 643 to 746 (RLRR…EVEN). EF-hand domains follow at residues 759–794 (EQLN…MGYD) and 795–830 (LGEV…ETAE). Positions 772, 776, 778, 783, 808, and 810 each coordinate Ca(2+).

It belongs to the alpha-actinin family. In terms of assembly, homodimer; antiparallel. Also forms heterodimers with ACTN2. Interacts with MYOZ1. Expression restricted to skeletal muscle fast (type 2) fibers (at protein level).

Functionally, F-actin cross-linking protein which is thought to anchor actin to a variety of intracellular structures. This is a bundling protein. This is Alpha-actinin-3 (Actn3) from Mus musculus (Mouse).